A 306-amino-acid polypeptide reads, in one-letter code: Recombination-associated protein RdgC (306 aa).

This sequence belongs to the RdgC family.

The protein localises to the cytoplasm. Its subcellular location is the nucleoid. Functionally, may be involved in recombination. This chain is Recombination-associated protein RdgC, found in Pseudomonas entomophila (strain L48).